The sequence spans 309 residues: Porphobilinogen deaminase (309 aa).

At Cys241 the chain carries S-(dipyrrolylmethanemethyl)cysteine.

Belongs to the HMBS family. In terms of assembly, monomer. Dipyrromethane is required as a cofactor.

The enzyme catalyses 4 porphobilinogen + H2O = hydroxymethylbilane + 4 NH4(+). It participates in porphyrin-containing compound metabolism; protoporphyrin-IX biosynthesis; coproporphyrinogen-III from 5-aminolevulinate: step 2/4. Tetrapolymerization of the monopyrrole PBG into the hydroxymethylbilane pre-uroporphyrinogen in several discrete steps. The sequence is that of Porphobilinogen deaminase from Bacillus cereus (strain ATCC 10987 / NRS 248).